A 187-amino-acid polypeptide reads, in one-letter code: Oligoribonuclease (187 aa).

An Exonuclease domain is found at 7 to 170; it reads LCWLDMEMTG…DDILESIEEM (164 aa). Y128 is an active-site residue.

This sequence belongs to the oligoribonuclease family.

The protein localises to the cytoplasm. 3'-to-5' exoribonuclease specific for small oligoribonucleotides. This Neisseria meningitidis serogroup B (strain ATCC BAA-335 / MC58) protein is Oligoribonuclease.